Reading from the N-terminus, the 538-residue chain is Cytochrome P450 monooxygenase okaG (538 aa).

Residues 3–23 (LISPLAAVLSAMAIVLGLLFF) traverse the membrane as a helical segment. Heme is bound at residue cysteine 484.

The protein belongs to the cytochrome P450 family. Heme is required as a cofactor.

Its subcellular location is the membrane. It catalyses the reaction 12-deshydroxyl okaramine E + 2 reduced [NADPH--hemoprotein reductase] + 2 O2 = 3-desmethyl okaramine B + 2 oxidized [NADPH--hemoprotein reductase] + 2 H2O + 2 H(+). The protein operates within alkaloid biosynthesis. In terms of biological role, nonribosomal peptide synthetase; part of the gene cluster that mediates the biosynthesis of okaramine B, a prenylated indole alkaloid that possesses an unusual octacyclic ring system, including a four-membered azetidine ring and an eight-membered azocine ring, and that exhibits insecticidal activity against silkworm larvae. Within the pathway, okaG acts as a 2,3-diol synthase that installs 2,3-diol on the okaramine scaffold to convert 12-deshydroxyl okaramine E into 3-desmethyl okaramine B. OkaG is also able to produce use okaramine E and produce okaramine D with the help of the methyltransferase okaF. The biosynthesis begins with the NRPS okaA that condenses two tryptophan molecules into cyclo(L-Trp-L-Trp). Prenylation by the prenyltransferase okaC then leads to the formation of cyclo(N8-(alpha,alpha-dimethylallyl)-L-Trp-6a-(alpha,alpha-dime-thylallyl)-L-Trp). This is followed by indole 2,3-epoxidation by the FAD-dependent monooxygenase okaB to facilitate the formation of the hexahydropyrrolo[2,3-b]indole (HPI) moiety of okaramine C. The cytochrome P450 monooxygenase okaD then likely catalyzes formation of the eight-membered ring of okaramine A. The dioxygenase okaE further forms the unusual 2-dimethyl-3-methyl-azetidine ring to yield 12-deshydroxyl okaramine E, as well as the hydroxylation of 12-deshydroxyl okaramine E to produce okaramine E. The cytochrome P450 monoxygenase okaG converts 12-deshydroxyl okaramine E into 3-desmethyl okaramine B which is further methylated by the methyltransferase okaF into okaramine B. In a shunt pathway, okaG and okaF together are also able to convert okaramine E into okaramine D. Okaramine H is produced by nonenzymatic conversion from okaramine A. In Penicillium ochrochloron, this protein is Cytochrome P450 monooxygenase okaG.